Reading from the N-terminus, the 314-residue chain is Epithelial cell adhesion molecule (314 aa).

The signal sequence occupies residues 1–23 (MAPPQVLAFGLLLAAATAAVAAA). Residues 24 to 265 (QQGCVCENYK…PPEFSMQGLQ (242 aa)) are Extracellular-facing. Intrachain disulfides connect Cys-27–Cys-46, Cys-29–Cys-59, Cys-38–Cys-48, Cys-66–Cys-99, Cys-110–Cys-116, and Cys-118–Cys-135. Asn-37 carries N-linked (GlcNAc...) asparagine glycosylation. The Thyroglobulin type-1 domain occupies 63-135 (ASKCLVMKAE…RTDKDSEISC (73 aa)). Asn-111 carries N-linked (GlcNAc...) asparagine glycosylation. An N-linked (GlcNAc...) asparagine glycan is attached at Asn-198. Residues 266-288 (AGIIAVIAVVAIAIVAGIIVLIV) traverse the membrane as a helical segment. Residues 289–314 (STKKRRAKYEKAEIKEMGEMHRELNA) lie on the Cytoplasmic side of the membrane.

It belongs to the EPCAM family. Monomer. Interacts with phosphorylated CLDN7. Post-translationally, glycosylation at Asn-198 is crucial for protein stability.

Its subcellular location is the lateral cell membrane. The protein localises to the cell junction. It localises to the tight junction. Functionally, may act as a physical homophilic interaction molecule between intestinal epithelial cells (IECs) and intraepithelial lymphocytes (IELs) at the mucosal epithelium for providing immunological barrier as a first line of defense against mucosal infection. Plays a role in embryonic stem cells proliferation and differentiation. Up-regulates the expression of FABP5, MYC and cyclins A and E. The sequence is that of Epithelial cell adhesion molecule (TACSTD1) from Sus scrofa (Pig).